A 319-amino-acid polypeptide reads, in one-letter code: Acetaldehyde dehydrogenase 1 (319 aa).

Cys129 serves as the catalytic Acyl-thioester intermediate. NAD(+) is bound by residues 160 to 168 and Asn287; that span reads SAGPGTRAN.

Belongs to the acetaldehyde dehydrogenase family.

It catalyses the reaction acetaldehyde + NAD(+) + CoA = acetyl-CoA + NADH + H(+). This chain is Acetaldehyde dehydrogenase 1, found in Burkholderia lata (strain ATCC 17760 / DSM 23089 / LMG 22485 / NCIMB 9086 / R18194 / 383).